The chain runs to 314 residues: Methionyl-tRNA formyltransferase (314 aa).

109–112 is a binding site for (6S)-5,6,7,8-tetrahydrofolate; it reads SLLP.

The protein belongs to the Fmt family.

The catalysed reaction is L-methionyl-tRNA(fMet) + (6R)-10-formyltetrahydrofolate = N-formyl-L-methionyl-tRNA(fMet) + (6S)-5,6,7,8-tetrahydrofolate + H(+). Functionally, attaches a formyl group to the free amino group of methionyl-tRNA(fMet). The formyl group appears to play a dual role in the initiator identity of N-formylmethionyl-tRNA by promoting its recognition by IF2 and preventing the misappropriation of this tRNA by the elongation apparatus. The sequence is that of Methionyl-tRNA formyltransferase from Alkaliphilus metalliredigens (strain QYMF).